A 231-amino-acid polypeptide reads, in one-letter code: MILIEHILGNVKKDPVWREKLKDATFDLLILDQREAQKSRCRKSSTQGLDLGISLDRNVVLADGDVLAWDEETNVAVVVQINLRDVMVIDLSELKSRSPDELIKTCFELGHALGNQHWKAVTKHNEVYVPLTVATTMMDSVMRTHGFQHLPFRFVKGAEILPLLTNSEARLLFGGAEDTDTHVHVASPLDEPHGSGLHIHGIHSHGEGHSHGDHDHDHSHSHGDHDHDHKH.

A disordered region spans residues 185-231 (VASPLDEPHGSGLHIHGIHSHGEGHSHGDHDHDHSHSHGDHDHDHKH). Over residues 204 to 231 (SHGEGHSHGDHDHDHSHSHGDHDHDHKH) the composition is skewed to basic and acidic residues.

It belongs to the UreE family.

The protein resides in the cytoplasm. Involved in urease metallocenter assembly. Binds nickel. Probably functions as a nickel donor during metallocenter assembly. The polypeptide is Urease accessory protein UreE (Yersinia pseudotuberculosis serotype O:1b (strain IP 31758)).